A 223-amino-acid polypeptide reads, in one-letter code: RNA polymerase sigma-H factor (223 aa).

The Polymerase core binding motif lies at 67-80 (DIVQEGMIGLYKSI). The H-T-H motif DNA-binding region spans 187-206 (YQEISEELNRHVKSIDNALQ).

It belongs to the sigma-70 factor family.

Functionally, sigma factors are initiation factors that promote the attachment of RNA polymerase to specific initiation sites and are then released. This sigma factor is involved in the transition to post-exponential phase in the beginning of sporulation. The protein is RNA polymerase sigma-H factor (sigH) of Bacillus licheniformis.